Consider the following 250-residue polypeptide: Cysteine proteinase inhibitor 12 (250 aa).

A signal peptide spans 1 to 32 (MRVAATTRPASSSAAAPLPLFLLLAVAAAAAA). Cystatin domains are found at residues 49–137 (GGAH…RNTG) and 156–202 (PGWR…AEVV). The Secondary area of contact motif lies at 93 to 97 (QVVAG).

The protein belongs to the cystatin family. Phytocystatin subfamily.

The protein resides in the secreted. In terms of biological role, specific inhibitor of cysteine proteinases. Probably involved in the regulation of endogenous processes and in defense against pests and pathogens. The polypeptide is Cysteine proteinase inhibitor 12 (Oryza sativa subsp. japonica (Rice)).